A 373-amino-acid chain; its full sequence is T-protein (373 aa).

Residues 1–90 enclose the Chorismate mutase domain; it reads MVAELTALRD…ESYSSENDKG (90 aa). A Prephenate/arogenate dehydrogenase domain is found at 99-361; that stretch reads RPVVIVGGGG…DYAQRFQSES (263 aa).

The protein in the C-terminal section; belongs to the prephenate/arogenate dehydrogenase family.

Its subcellular location is the cytoplasm. The catalysed reaction is chorismate = prephenate. It catalyses the reaction prephenate + NAD(+) = 3-(4-hydroxyphenyl)pyruvate + CO2 + NADH. It participates in amino-acid biosynthesis; L-tyrosine biosynthesis; (4-hydroxyphenyl)pyruvate from prephenate (NAD(+) route): step 1/1. The protein operates within metabolic intermediate biosynthesis; prephenate biosynthesis; prephenate from chorismate: step 1/1. The chain is T-protein (tyrA) from Escherichia coli (strain K12).